The primary structure comprises 249 residues: Uridylate kinase (249 aa).

21–24 (KLSG) contributes to the ATP binding site. Gly-63 contacts UMP. Residues Gly-64 and Arg-68 each contribute to the ATP site. UMP is bound by residues Asp-84 and 145-152 (TGNPFVTT). Residues Thr-172, Tyr-178, and Asp-181 each contribute to the ATP site.

It belongs to the UMP kinase family. As to quaternary structure, homohexamer.

The protein localises to the cytoplasm. It carries out the reaction UMP + ATP = UDP + ADP. The protein operates within pyrimidine metabolism; CTP biosynthesis via de novo pathway; UDP from UMP (UMPK route): step 1/1. Its activity is regulated as follows. Inhibited by UTP. Its function is as follows. Catalyzes the reversible phosphorylation of UMP to UDP. This Francisella tularensis subsp. holarctica (strain FTNF002-00 / FTA) protein is Uridylate kinase.